Reading from the N-terminus, the 561-residue chain is Acyl-CoA ligase ppsA (561 aa).

An N-linked (GlcNAc...) asparagine glycan is attached at Asn21. Residues 71 to 91 (SILYPALFLAIVGVGAVYMGA) form a helical membrane-spanning segment. Residue 203–214 (MFATSGTSGLPK) participates in AMP binding. Asn396 is a glycosylation site (N-linked (GlcNAc...) asparagine). An AMP-binding region spans residues 462-540 (ELEAELAQHP…DSIPRNSGGK (79 aa)).

Belongs to the ATP-dependent AMP-binding enzyme family.

The protein resides in the membrane. It carries out the reaction acetate + ATP + CoA = acetyl-CoA + ADP + phosphate. It catalyses the reaction propanoate + ATP + CoA = propanoyl-CoA + AMP + diphosphate. The protein operates within secondary metabolite biosynthesis. Its function is as follows. Acyl-CoA ligase; part of the gene cluster that mediates the biosynthesis of 2,4'-dihydroxy-3'-methoxypropiophenone. The first step of the pathway is the conversion of acetate into acetyl-CoA by the acyl-CoA ligase ppsA. Acetyl-CoA is then used as a starter unit by the polyketide synthase ppsB and condensed with 4 malonyl-CoA unit to produce the pentaketide backbone. During polyketide extension, the polykedite chain is probably reduced and dehydrated by the KR and PT domains, respectively. O-methylation seems to be catalyzed by an unknown methyltransferase rather than by the CMeT domain of ppsB. Two hydroxylations and one further decarboxylation step catalyzed by yet unknown enzymes are then required to yield 4'-hydroxy-3'-methoxypropiophenone. PpsC functions as a carrier protein to transport 4'-hydroxy-3'-methoxypropiophenone to a specific cell compartment in which 4'-hydroxy-3'-methoxypropiophenone is hydroxylated to 2,4'-dihydroxy-3'-methoxypropiophenone by a still to be identified enzyme. The sequence is that of Acyl-CoA ligase ppsA from Aspergillus oryzae (strain ATCC 42149 / RIB 40) (Yellow koji mold).